The chain runs to 506 residues: Aminoaldehyde dehydrogenase 2 (506 aa).

Asp-101 provides a ligand contact to Na(+). Residues 161-163 (TPW) and 187-190 (KPSE) contribute to the NAD(+) site. Na(+) is bound at residue Leu-191. NAD(+) is bound by residues 241–244 (STET) and Glu-262. Glu-262 serves as the catalytic Proton acceptor. The active-site Nucleophile is the Cys-297. 2 residues coordinate NAD(+): Glu-396 and Trp-462.

Belongs to the aldehyde dehydrogenase family.

The catalysed reaction is 4-aminobutanal + NAD(+) + H2O = 4-aminobutanoate + NADH + 2 H(+). The enzyme catalyses 3-aminopropanal + NAD(+) + H2O = beta-alanine + NADH + 2 H(+). It catalyses the reaction 4-(trimethylamino)butanal + NAD(+) + H2O = 4-(trimethylamino)butanoate + NADH + 2 H(+). It carries out the reaction 4-guanidinobutanal + NAD(+) + H2O = 4-guanidinobutanoate + NADH + 2 H(+). It participates in amine and polyamine biosynthesis; betaine biosynthesis via choline pathway; betaine from betaine aldehyde: step 1/1. In terms of biological role, dehydrogenase that catalyzes the oxidation of several aminoaldehydes. Metabolizes and detoxifies aldehyde products of polyamine degradation to non-toxic amino acids. Catalyzes the oxidation of 4-aminobutanal and 3-aminopropanal to 4-aminobutanoate and beta-alanine, respectively. Catalyzes the oxidation of 4-(trimethylamino)butanal and 4-guanidinobutanal to 4-trimethylammoniobutanoate and 4-guanidinobutanoate, respectively. The polypeptide is Aminoaldehyde dehydrogenase 2 (Zea mays (Maize)).